The following is a 251-amino-acid chain: NAD kinase (251 aa).

Asp51 (proton acceptor) is an active-site residue. NAD(+) contacts are provided by residues 51–52, Lys56, 113–114, Lys124, His140, Asp142, 153–158, and Ala177; these read DG, NE, and TGYSLS.

It belongs to the NAD kinase family. The cofactor is a divalent metal cation.

It is found in the cytoplasm. It carries out the reaction NAD(+) + ATP = ADP + NADP(+) + H(+). Functionally, involved in the regulation of the intracellular balance of NAD and NADP, and is a key enzyme in the biosynthesis of NADP. Catalyzes specifically the phosphorylation on 2'-hydroxyl of the adenosine moiety of NAD to yield NADP. This chain is NAD kinase, found in Thermosipho melanesiensis (strain DSM 12029 / CIP 104789 / BI429).